The following is a 785-amino-acid chain: Protein translocase subunit SecA 3 (785 aa).

ATP is bound by residues glutamine 98, 116–120, and aspartate 505; that span reads GEGKT.

It belongs to the SecA family. In terms of assembly, monomer and homodimer. Part of the essential Sec protein translocation apparatus which comprises SecA, SecYEG and auxiliary proteins SecDF. Other proteins may also be involved.

The protein localises to the cell membrane. Its subcellular location is the cytoplasm. It carries out the reaction ATP + H2O + cellular proteinSide 1 = ADP + phosphate + cellular proteinSide 2.. Its function is as follows. Part of the Sec protein translocase complex. Interacts with the SecYEG preprotein conducting channel. Has a central role in coupling the hydrolysis of ATP to the transfer of proteins into and across the cell membrane, serving as an ATP-driven molecular motor driving the stepwise translocation of polypeptide chains across the membrane. The protein is Protein translocase subunit SecA 3 of Mycolicibacterium vanbaalenii (strain DSM 7251 / JCM 13017 / BCRC 16820 / KCTC 9966 / NRRL B-24157 / PYR-1) (Mycobacterium vanbaalenii).